The following is a 591-amino-acid chain: V-type ATP synthase alpha chain (591 aa).

242 to 249 (GPFGAGKT) contributes to the ATP binding site.

The protein belongs to the ATPase alpha/beta chains family.

It catalyses the reaction ATP + H2O + 4 H(+)(in) = ADP + phosphate + 5 H(+)(out). Functionally, produces ATP from ADP in the presence of a proton gradient across the membrane. The V-type alpha chain is a catalytic subunit. The polypeptide is V-type ATP synthase alpha chain (Chlamydia caviae (strain ATCC VR-813 / DSM 19441 / 03DC25 / GPIC) (Chlamydophila caviae)).